A 482-amino-acid polypeptide reads, in one-letter code: MEDLETRCASLRTEIAAAEAQLTKLKRELHEAEGAALRAQSQKTASANATTGQRTKSKWPLHGEEYRRYGRQMIVPQFGLQGQLKLRDAKVLIVGAGGLGCPAALYLAGAGVGTIGLVDGDTVEASNLHRQVLHRSRNVGKLKVDSAIEYLRELNPHPTYIAHQAHLTPREAPDIFKDYDLILDCTDNPATRYLISDTAVLLGKPLVSASALRTEGQLMVLNNPPQPPGDKTGGPCYRCVFPKPPPANSVTSCADGGILGPVVGTMGVLQASEAIKVLTSAGESVEATPPSLLIFSAYSSPQFRTIKLRSRRPNCAVCSAEATVTLESVRSGSMDYVFFCGTVDPADILSPEERISPSEYGNVDSAGAQRHIIDVREKVQFDICSLENSINIPMSTILASAYSAPTLDADEPKRLPSWLPPEVAHESNKPIYVVCRQGNDSQTVVRKLKELGLDHGGERPVVDIKGGFRSWREQVDPDWPDY.

The segment at 33–57 (EGAALRAQSQKTASANATTGQRTKS) is disordered. Positions 39-54 (AQSQKTASANATTGQR) are enriched in polar residues. ATP contacts are provided by residues glycine 98, aspartate 119, 126-130 (SNLHR), lysine 143, and 187-188 (DN). Zn(2+) contacts are provided by cysteine 236 and cysteine 239. The active-site Glycyl thioester intermediate; for adenylyltransferase activity is cysteine 253. Zn(2+) is bound by residues cysteine 315 and cysteine 318. One can recognise a Rhodanese domain in the interval 366–480 (AGAQRHIIDV…WREQVDPDWP (115 aa)). Cysteine 435 functions as the Cysteine persulfide intermediate; for sulfurtransferase activity in the catalytic mechanism.

This sequence in the N-terminal section; belongs to the HesA/MoeB/ThiF family. UBA4 subfamily. Zn(2+) serves as cofactor.

The protein resides in the cytoplasm. The protein localises to the cytosol. It catalyses the reaction [molybdopterin-synthase sulfur-carrier protein]-C-terminal Gly-Gly + ATP + H(+) = [molybdopterin-synthase sulfur-carrier protein]-C-terminal Gly-Gly-AMP + diphosphate. The catalysed reaction is [molybdopterin-synthase sulfur-carrier protein]-C-terminal Gly-Gly-AMP + S-sulfanyl-L-cysteinyl-[cysteine desulfurase] + AH2 = [molybdopterin-synthase sulfur-carrier protein]-C-terminal-Gly-aminoethanethioate + L-cysteinyl-[cysteine desulfurase] + A + AMP + 2 H(+). It participates in tRNA modification; 5-methoxycarbonylmethyl-2-thiouridine-tRNA biosynthesis. Its pathway is cofactor biosynthesis; molybdopterin biosynthesis. Functionally, plays a central role in 2-thiolation of mcm(5)S(2)U at tRNA wobble positions of cytosolic tRNA(Lys), tRNA(Glu) and tRNA(Gln). Also essential during biosynthesis of the molybdenum cofactor. Acts by mediating the C-terminal thiocarboxylation of sulfur carriers urm1 and mocs2a. Its N-terminus first activates urm1 and mocs2a as acyl-adenylates (-COAMP), then the persulfide sulfur on the catalytic cysteine is transferred to urm1 and mocs2a to form thiocarboxylation (-COSH) of their C-terminus. The reaction probably involves hydrogen sulfide that is generated from the persulfide intermediate and that acts as a nucleophile towards urm1 and mocs2a. Subsequently, a transient disulfide bond is formed. Does not use thiosulfate as sulfur donor; nfs1 probably acting as a sulfur donor for thiocarboxylation reactions. This is Adenylyltransferase and sulfurtransferase uba4 from Emericella nidulans (strain FGSC A4 / ATCC 38163 / CBS 112.46 / NRRL 194 / M139) (Aspergillus nidulans).